Reading from the N-terminus, the 346-residue chain is Methionine import ATP-binding protein MetN 1 (346 aa).

An ABC transporter domain is found at 2 to 241; it reads IELKNVSKVF…PQHVTTKKFV (240 aa). 38–45 lines the ATP pocket; the sequence is GYSGAGKS.

The protein belongs to the ABC transporter superfamily. Methionine importer (TC 3.A.1.24) family. As to quaternary structure, the complex is composed of two ATP-binding proteins (MetN), two transmembrane proteins (MetI) and a solute-binding protein (MetQ).

The protein localises to the cell membrane. The catalysed reaction is L-methionine(out) + ATP + H2O = L-methionine(in) + ADP + phosphate + H(+). It catalyses the reaction D-methionine(out) + ATP + H2O = D-methionine(in) + ADP + phosphate + H(+). Part of the ABC transporter complex MetNIQ involved in methionine import. Responsible for energy coupling to the transport system. The sequence is that of Methionine import ATP-binding protein MetN 1 from Bacillus anthracis.